A 205-amino-acid chain; its full sequence is Large ribosomal subunit protein bL25 (205 aa).

The disordered stretch occupies residues 184–205 (QPAGAVSEAAEGGEAAGETPAA). Residues 186–205 (AGAVSEAAEGGEAAGETPAA) are compositionally biased toward low complexity.

The protein belongs to the bacterial ribosomal protein bL25 family. CTC subfamily. In terms of assembly, part of the 50S ribosomal subunit; part of the 5S rRNA/L5/L18/L25 subcomplex. Contacts the 5S rRNA. Binds to the 5S rRNA independently of L5 and L18.

Its function is as follows. This is one of the proteins that binds to the 5S RNA in the ribosome where it forms part of the central protuberance. The polypeptide is Large ribosomal subunit protein bL25 (Cupriavidus necator (strain ATCC 17699 / DSM 428 / KCTC 22496 / NCIMB 10442 / H16 / Stanier 337) (Ralstonia eutropha)).